The primary structure comprises 644 residues: G-protein coupled receptor-associated protein LMBRD2 (644 aa).

The Extracellular portion of the chain corresponds to 1–4 (MGTV). A helical membrane pass occupies residues 5–27 (SLAVQLFIVFLLTSYLLNKYSTI). Topologically, residues 28 to 31 (RKQN) are cytoplasmic. The helical transmembrane segment at 32–52 (PIVTISTFIGWYFSLIIVFVL) threads the bilayer. Residues 53–102 (PLDVAITFFHKCENDRQRVLNTTSTPAPIVPECELPGGYVPDDVLFDLWR) lie on the Extracellular side of the membrane. Asn73 is a glycosylation site (N-linked (GlcNAc...) asparagine). A helical transmembrane segment spans residues 103–123 (VVYWSAQILTWLILPLLQSYV). Residues 124-145 (TAGNFTIFGKIRAAVINNTVYY) are Cytoplasmic-facing. A helical membrane pass occupies residues 146–166 (AIYSLCFLAILIYAMFKGVSI). Residues 167-172 (NIENLK) lie on the Extracellular side of the membrane. Residues 173-193 (VILVSASNTWGLFLLVVLLGH) traverse the membrane as a helical segment. Over 194–369 (GLVELPRSLW…RLQTPFCRVL (176 aa)) the chain is Cytoplasmic. A coiled-coil region spans residues 216-245 (YFDIEKLASEKSEAEENVKEIYKKVRVLFN). Residues 370 to 390 (GVVTVFMTFFVLFSECTFFVV) form a helical membrane-spanning segment. Residues 391–412 (SYTVSPAAFVTEYASNRFHYKY) lie on the Extracellular side of the membrane. The chain crosses the membrane as a helical span at residues 413 to 433 (TQFVAFGIIVYLITCAYFTIF). At 434–453 (RLQIYKYYHLDPNGHTDENS) the chain is on the cytoplasmic side. A helical membrane pass occupies residues 454-474 (ILFSAILLCRLTPPICLNFLG). The Extracellular portion of the chain corresponds to 475–502 (MIHMDSHVSMAKSFGVETQFTKLMGHLD). The helical transmembrane segment at 503-523 (VIPILAKGINIYLPICIILLC) threads the bilayer. The Cytoplasmic segment spans residues 524–644 (AIHYYRVGAY…PSSSGFFDDM (121 aa)). Basic and acidic residues predominate over residues 567–576 (SIKRSNERNQ). A disordered region spans residues 567–644 (SIKRSNERNQ…PSSSGFFDDM (78 aa)). The segment covering 578–594 (NQSWTNTITSNTSTTSN) has biased composition (low complexity). The segment covering 621-644 (VSSTTRISLSPTEHPSSSGFFDDM) has biased composition (polar residues).

The protein belongs to the LIMR family.

It localises to the cell membrane. Its function is as follows. May associate with G-protein coupled receptors and regulate downstream signaling pathways. This Caenorhabditis briggsae protein is G-protein coupled receptor-associated protein LMBRD2.